The sequence spans 437 residues: Chromosomal replication initiator protein DnaA (437 aa).

The domain I, interacts with DnaA modulators stretch occupies residues 1 to 74 (MNLAWNKILE…EACGDKIPVE (74 aa)). Residues 74-98 (EILIETKATSPLQSFLEKSFDQKDF) form a domain II region. Residues 99–315 (QFNPDYTFET…GALNDIYLYK (217 aa)) are domain III, AAA+ region. Residues Gly-142, Gly-144, Lys-145, and Thr-146 each contribute to the ATP site. The tract at residues 316 to 437 (KSYSLLFLNL…ERISSKYKLQ (122 aa)) is domain IV, binds dsDNA.

It belongs to the DnaA family. Oligomerizes as a right-handed, spiral filament on DNA at oriC.

The protein resides in the cytoplasm. Its function is as follows. Plays an essential role in the initiation and regulation of chromosomal replication. ATP-DnaA binds to the origin of replication (oriC) to initiate formation of the DNA replication initiation complex once per cell cycle. Binds the DnaA box (a 9 base pair repeat at the origin) and separates the double-stranded (ds)DNA. Forms a right-handed helical filament on oriC DNA; dsDNA binds to the exterior of the filament while single-stranded (ss)DNA is stabiized in the filament's interior. The ATP-DnaA-oriC complex binds and stabilizes one strand of the AT-rich DNA unwinding element (DUE), permitting loading of DNA polymerase. After initiation quickly degrades to an ADP-DnaA complex that is not apt for DNA replication. Binds acidic phospholipids. The sequence is that of Chromosomal replication initiator protein DnaA from Leptospira borgpetersenii serovar Hardjo-bovis (strain JB197).